The primary structure comprises 474 residues: Gamma-aminobutyric acid receptor subunit beta-1 (474 aa).

The N-terminal stretch at 1 to 25 (MWTVQNRESLGLLSFPVMVAMVCCA) is a signal peptide. Residues 26-245 (HSSNEPSNMS…SFRLKRNIGY (220 aa)) lie on the Extracellular side of the membrane. N-linked (GlcNAc...) asparagine glycosylation is found at Asn-33 and Asn-105. Tyr-122 provides a ligand contact to histamine. A disulfide bond links Cys-161 and Cys-175. Residue Asn-174 is glycosylated (N-linked (GlcNAc...) asparagine). Residues 181–182 (SY) and Thr-227 each bind histamine. 4-aminobutanoate-binding residues include Tyr-182 and Thr-227. The next 3 membrane-spanning stretches (helical) occupy residues 246 to 267 (FILQ…SFWI), 271 to 293 (ASAA…STHL), and 305 to 327 (AIDI…YAFV). The Cytoplasmic segment spans residues 328–451 (NYIFFGKGPQ…DLTDVNSIDK (124 aa)). Residues 452–473 (WSRMFFPITFSLFNVVYWLYYV) traverse the membrane as a helical segment.

It belongs to the ligand-gated ion channel (TC 1.A.9) family. Gamma-aminobutyric acid receptor (TC 1.A.9.5) subfamily. GABRB1 sub-subfamily. As to quaternary structure, heteropentamer, formed by a combination of alpha (GABRA1-6), beta (GABRB1-3), gamma (GABRG1-3), delta (GABRD), epsilon (GABRE), rho (GABRR1-3), pi (GABRP) and theta (GABRQ) chains, each subunit exhibiting distinct physiological and pharmacological properties. Binds UBQLN1.

The protein resides in the postsynaptic cell membrane. The protein localises to the cell membrane. The catalysed reaction is chloride(in) = chloride(out). Potentiated by histamine. Functionally, beta subunit of the heteropentameric ligand-gated chloride channel gated by gamma-aminobutyric acid (GABA), a major inhibitory neurotransmitter in the brain. GABA-gated chloride channels, also named GABA(A) receptors (GABAAR), consist of five subunits arranged around a central pore and contain GABA active binding site(s) located at the alpha and beta subunit interface(s). When activated by GABA, GABAARs selectively allow the flow of chloride anions across the cell membrane down their electrochemical gradient. Chloride influx into the postsynaptic neuron following GABAAR opening decreases the neuron ability to generate a new action potential, thereby reducing nerve transmission. Beta-containing GABAARs can simultaneously bind GABA and histamine where histamine binds at the interface of two neighboring beta subunits, which may be involved in the regulation of sleep and wakefulness. The protein is Gamma-aminobutyric acid receptor subunit beta-1 of Mus musculus (Mouse).